The chain runs to 353 residues: Photosystem II protein D1 (353 aa).

N-acetylthreonine is present on threonine 2. The residue at position 2 (threonine 2) is a Phosphothreonine. The next 3 helical transmembrane spans lie at 29–46, 118–133, and 142–156; these read YIGWFGVLMIPTLLTATS, HFLLGVACYMGREWEL, and WIAVAYSAPVAAATA. Histidine 118 lines the chlorophyll a pocket. Tyrosine 126 serves as a coordination point for pheophytin a. Residues aspartate 170 and glutamate 189 each contribute to the [CaMn4O5] cluster site. A helical transmembrane segment spans residues 197–218; the sequence is FHMLGVAGVFGGSLFSAMHGSL. Histidine 198 provides a ligand contact to chlorophyll a. A quinone is bound by residues histidine 215 and 264-265; that span reads SF. Residue histidine 215 participates in Fe cation binding. Histidine 272 contacts Fe cation. Residues 274–288 traverse the membrane as a helical segment; sequence FLAAWPVVGIWFTAL. Positions 332, 333, 342, and 344 each coordinate [CaMn4O5] cluster. The propeptide occupies 345-353; the sequence is AVEAPSING.

It belongs to the reaction center PufL/M/PsbA/D family. PSII is composed of 1 copy each of membrane proteins PsbA, PsbB, PsbC, PsbD, PsbE, PsbF, PsbH, PsbI, PsbJ, PsbK, PsbL, PsbM, PsbT, PsbX, PsbY, PsbZ, Psb30/Ycf12, at least 3 peripheral proteins of the oxygen-evolving complex and a large number of cofactors. It forms dimeric complexes. The D1/D2 heterodimer binds P680, chlorophylls that are the primary electron donor of PSII, and subsequent electron acceptors. It shares a non-heme iron and each subunit binds pheophytin, quinone, additional chlorophylls, carotenoids and lipids. D1 provides most of the ligands for the Mn4-Ca-O5 cluster of the oxygen-evolving complex (OEC). There is also a Cl(-1) ion associated with D1 and D2, which is required for oxygen evolution. The PSII complex binds additional chlorophylls, carotenoids and specific lipids. serves as cofactor. In terms of processing, tyr-161 forms a radical intermediate that is referred to as redox-active TyrZ, YZ or Y-Z. C-terminally processed by CTPA; processing is essential to allow assembly of the oxygen-evolving complex and thus photosynthetic growth.

Its subcellular location is the plastid. It is found in the chloroplast thylakoid membrane. It carries out the reaction 2 a plastoquinone + 4 hnu + 2 H2O = 2 a plastoquinol + O2. Its function is as follows. Photosystem II (PSII) is a light-driven water:plastoquinone oxidoreductase that uses light energy to abstract electrons from H(2)O, generating O(2) and a proton gradient subsequently used for ATP formation. It consists of a core antenna complex that captures photons, and an electron transfer chain that converts photonic excitation into a charge separation. The D1/D2 (PsbA/PsbD) reaction center heterodimer binds P680, the primary electron donor of PSII as well as several subsequent electron acceptors. The chain is Photosystem II protein D1 from Illicium oligandrum (Star anise).